A 206-amino-acid chain; its full sequence is Small ribosomal subunit protein uS4 (206 aa).

The S4 RNA-binding domain occupies 96 to 157 (SRLDNVVYRM…KAQKQLRVQA (62 aa)).

Belongs to the universal ribosomal protein uS4 family. As to quaternary structure, part of the 30S ribosomal subunit. Contacts protein S5. The interaction surface between S4 and S5 is involved in control of translational fidelity.

Functionally, one of the primary rRNA binding proteins, it binds directly to 16S rRNA where it nucleates assembly of the body of the 30S subunit. Its function is as follows. With S5 and S12 plays an important role in translational accuracy. The chain is Small ribosomal subunit protein uS4 from Alkalilimnicola ehrlichii (strain ATCC BAA-1101 / DSM 17681 / MLHE-1).